A 224-amino-acid polypeptide reads, in one-letter code: Holliday junction branch migration complex subunit RuvA (224 aa).

A domain I region spans residues methionine 1 to proline 64. The tract at residues threonine 65–glutamate 143 is domain II. The tract at residues alanine 144–proline 171 is flexible linker. The tract at residues serine 172 to glycine 224 is domain III.

The protein belongs to the RuvA family. Homotetramer. Forms an RuvA(8)-RuvB(12)-Holliday junction (HJ) complex. HJ DNA is sandwiched between 2 RuvA tetramers; dsDNA enters through RuvA and exits via RuvB. An RuvB hexamer assembles on each DNA strand where it exits the tetramer. Each RuvB hexamer is contacted by two RuvA subunits (via domain III) on 2 adjacent RuvB subunits; this complex drives branch migration. In the full resolvosome a probable DNA-RuvA(4)-RuvB(12)-RuvC(2) complex forms which resolves the HJ.

It localises to the cytoplasm. Functionally, the RuvA-RuvB-RuvC complex processes Holliday junction (HJ) DNA during genetic recombination and DNA repair, while the RuvA-RuvB complex plays an important role in the rescue of blocked DNA replication forks via replication fork reversal (RFR). RuvA specifically binds to HJ cruciform DNA, conferring on it an open structure. The RuvB hexamer acts as an ATP-dependent pump, pulling dsDNA into and through the RuvAB complex. HJ branch migration allows RuvC to scan DNA until it finds its consensus sequence, where it cleaves and resolves the cruciform DNA. The chain is Holliday junction branch migration complex subunit RuvA from Dinoroseobacter shibae (strain DSM 16493 / NCIMB 14021 / DFL 12).